The chain runs to 123 residues: Large ribosomal subunit protein eL8 (123 aa).

Belongs to the eukaryotic ribosomal protein eL8 family. As to quaternary structure, part of the 50S ribosomal subunit. Probably part of the RNase P complex.

It is found in the cytoplasm. Its function is as follows. Multifunctional RNA-binding protein that recognizes the K-turn motif in ribosomal RNA, the RNA component of RNase P, box H/ACA, box C/D and box C'/D' sRNAs. This Methanothermobacter thermautotrophicus (strain ATCC 29096 / DSM 1053 / JCM 10044 / NBRC 100330 / Delta H) (Methanobacterium thermoautotrophicum) protein is Large ribosomal subunit protein eL8.